Reading from the N-terminus, the 77-residue chain is Chaplin-H (77 aa).

An N-terminal signal peptide occupies residues 1–25; sequence MLKKVVAAAAATGGLVLAGAGMAVA. The Chaplin domain occupies 36 to 76; the sequence is SPGVLSGNVVQVPVHVPVNVCGNTISVIGLLNPAFGNVCIN. Forms amyloid fibrils in vitro stretches follow at residues 38-54 and 57-72; these read GVLS…VPVN and GNTI…AFGN. Cys56 and Cys74 are disulfide-bonded.

The protein belongs to the chaplin family. Short chaplin subfamily. Homodimer; disulfide linked. About 10% of ChpH isolated from cell wall forms disulfide-bonded homodimers.

The protein localises to the cell surface. It localises to the secreted. It is found in the cell wall. The protein resides in the fimbrium. In terms of biological role, one of 8 partially redundant surface-active proteins required for efficient formation of aerial mycelium; the short chaplins assemble into a hydrophobic, amyloidal fibrillar surface layer that envelopes and protects aerial hyphae and spores, presumably anchored to the long chaplins. Chaplins have an overlapping function with the surface-active SapB peptide; chaplins are essential on minimal medium while on rich medium both chaplins and SapB are required for efficient aerial hyphae formation. Chaplins are also involved in cell attachment to a hydrophobic surface. Forms amyloid fibrils in vitro probably composed of stacked beta-sheets. A small chaplin extract (ChpD, ChpE, ChpF, ChpG and ChpH) self-assembles into 2 different amyloids; small fibrils at the air-water interface form an amphipathic membrane that resembles spore-surface structures involved in aerial hyphae formation, and hydrophilic fibrils in solution that resemble the fibers that attach cells to a hydrophobic surface. At the air-water interface the hydrophilic surface is in contact with water (probably equivalent to the peptidoglycan layer), while the hydrophobic face is exposed to the air, making the surface of the aerial hyphae hydrophobic. A minimal chaplin strain capable of forming aerial mycelium/hyphae on minimal medium contains ChpC, ChpE and ChpH. The strain also has restored rodlet formation on the hyphae surface. A small chaplin extract applied to a chaplin-deficient strain restores aerial hyphae formation. The small chaplin extract forms an amyloid-like structure similar to that seen on the surface of cells without rodlets (rdlA-rdlB deletions), and is highly surface active, reducing surface tension from 72 to 26 mJ/m(2), which probably allows escape of hyphae from an aqueous environment into air. This Streptomyces coelicolor (strain ATCC BAA-471 / A3(2) / M145) protein is Chaplin-H.